The chain runs to 325 residues: UPF0285 protein MmarC5_0962 (325 aa).

The protein belongs to the UPF0285 family.

The chain is UPF0285 protein MmarC5_0962 from Methanococcus maripaludis (strain C5 / ATCC BAA-1333).